The following is a 187-amino-acid chain: Peptide deformylase (187 aa).

Residues Cys94 and His136 each contribute to the Fe cation site. Residue Glu137 is part of the active site. His140 provides a ligand contact to Fe cation.

Belongs to the polypeptide deformylase family. The cofactor is Fe(2+).

The catalysed reaction is N-terminal N-formyl-L-methionyl-[peptide] + H2O = N-terminal L-methionyl-[peptide] + formate. Functionally, removes the formyl group from the N-terminal Met of newly synthesized proteins. Requires at least a dipeptide for an efficient rate of reaction. N-terminal L-methionine is a prerequisite for activity but the enzyme has broad specificity at other positions. The polypeptide is Peptide deformylase (Chlorobaculum parvum (strain DSM 263 / NCIMB 8327) (Chlorobium vibrioforme subsp. thiosulfatophilum)).